A 373-amino-acid chain; its full sequence is Glutamate 5-kinase (373 aa).

Lys12 contributes to the ATP binding site. Substrate-binding residues include Ser52, Asp139, and Asn154. 216–222 (TGGMVTK) lines the ATP pocket. Residues 281–359 (RGSICVDDGA…QELNAVLGGN (79 aa)) enclose the PUA domain.

Belongs to the glutamate 5-kinase family.

Its subcellular location is the cytoplasm. The enzyme catalyses L-glutamate + ATP = L-glutamyl 5-phosphate + ADP. Its pathway is amino-acid biosynthesis; L-proline biosynthesis; L-glutamate 5-semialdehyde from L-glutamate: step 1/2. Functionally, catalyzes the transfer of a phosphate group to glutamate to form L-glutamate 5-phosphate. The polypeptide is Glutamate 5-kinase (Dehalococcoides mccartyi (strain CBDB1)).